Consider the following 967-residue polypeptide: LRR receptor-like serine/threonine-protein kinase ERL2 (967 aa).

A signal peptide spans 1 to 27 (MRRIETMKGLFFCLGMVVFMLLGSVSP). The Extracellular portion of the chain corresponds to 28–585 (MNNEGKALMA…SLPKSQVFTR (558 aa)). Residues N70 and N79 are each glycosylated (N-linked (GlcNAc...) asparagine). LRR repeat units lie at residues 74-97 (NVVSLNLSNLNLGGEISSALGDLM), 98-120 (NLQSIDLQGNKLGGQIPDEIGNC), 122-145 (SLAYVDFSTNLLFGDIPFSISKLK), 146-166 (QLEFLNLKNNQLTGPIPATLT), 170-192 (NLKTLDLARNQLTGEIPRLLYWN), 194-216 (VLQYLGLRGNMLTGTLSPDMCQL), 218-240 (GLWYFDVRGNNLTGTIPESIGNC), 242-261 (SFEILDVSYNQITGVIPYNI), 265-287 (QVATLSLQGNKLTGRIPEVIGLM), 289-311 (ALAVLDLSDNELTGPIPPILGNL), 313-335 (FTGKLYLHGNKLTGQIPPELGNM), 337-359 (RLSYLQLNDNELVGKIPPELGKL), 361-382 (QLFELNLANNNLVGLIPSNISS), 385-406 (ALNQFNVHGNFLSGAVPLEFRN), 409-431 (SLTYLNLSSNSFKGKIPAELGHI), 433-456 (NLDTLDLSGNNFSGSIPLTLGDLE), 457-479 (HLLILNLSRNHLNGTLPAEFGNL), 481-503 (SIQIIDVSFNFLAGVIPTELGQL), 505-527 (NINSLILNNNKIHGKIPDQLTNC), and 529-550 (SLANLNISFNNLSGIIPPMKNF). 2 N-linked (GlcNAc...) asparagine glycosylation sites follow: N228 and N239. N-linked (GlcNAc...) asparagine glycans are attached at residues N310 and N334. N379 is a glycosylation site (N-linked (GlcNAc...) asparagine). N-linked (GlcNAc...) asparagine glycosylation is found at N414, N443, N462, and N469. N-linked (GlcNAc...) asparagine glycosylation is found at N534, N539, and N549. A helical membrane pass occupies residues 586–606 (VAVICMVLGFITLICMIFIAV). Residues 607 to 967 (YKSKQQKPVL…FREDISKSSL (361 aa)) are Cytoplasmic-facing. Residues T640 and T648 each carry the phosphothreonine modification. A Protein kinase domain is found at 651–921 (LDEKYIIGYG…EVSRVLLSLV (271 aa)). Residues 657–665 (IGYGASSTV) and K679 contribute to the ATP site. Phosphotyrosine is present on residues Y724 and Y763. The active-site Proton acceptor is D776. Phosphotyrosine is present on Y818. Phosphothreonine is present on T826. The tract at residues 921–955 (VPSPPPKKLPSPAKVQEGEERRESHSSDTTTPQWF) is disordered. Positions 936–946 (QEGEERRESHS) are enriched in basic and acidic residues.

Belongs to the protein kinase superfamily. Ser/Thr protein kinase family. As to expression, mostly expressed in developing organs, including bud clusters, flowers, siliques and young rosettes. Also detected in mature aboveground organs, such as leaves, stems and pedicels, but barely in roots.

It localises to the membrane. It catalyses the reaction L-seryl-[protein] + ATP = O-phospho-L-seryl-[protein] + ADP + H(+). It carries out the reaction L-threonyl-[protein] + ATP = O-phospho-L-threonyl-[protein] + ADP + H(+). Its function is as follows. Receptor kinase that regulates inflorescence architecture and organ shape as well as stomatal patterning, including density and clustering, together with ERL1 and ER. In Arabidopsis thaliana (Mouse-ear cress), this protein is LRR receptor-like serine/threonine-protein kinase ERL2 (ERL2).